The sequence spans 132 residues: MAEVLKLTILTPDREFYKGEVLEVITDSIQGNITILPGHMPLITTLKSTDTRIVEKSGKELKAFTSNGILEIKNNELKILCDVCEWPGEIDLKRAEEAKKRAEQRLAHKDGIDVKRAQLALNRALARINLLK.

Belongs to the ATPase epsilon chain family. As to quaternary structure, F-type ATPases have 2 components, CF(1) - the catalytic core - and CF(0) - the membrane proton channel. CF(1) has five subunits: alpha(3), beta(3), gamma(1), delta(1), epsilon(1). CF(0) has three main subunits: a, b and c.

The protein localises to the cell membrane. Functionally, produces ATP from ADP in the presence of a proton gradient across the membrane. The sequence is that of ATP synthase epsilon chain from Clostridium kluyveri (strain NBRC 12016).